The following is a 687-amino-acid chain: Sphingoid long chain base kinase 5 (687 aa).

A disordered region spans residues 1–20; the sequence is MTLKPSKRRKGRSRHSRKKQ. S-palmitoyl cysteine; by AKR1 attachment occurs at residues C91 and C94. Over residues 101-116 the composition is skewed to basic and acidic residues; that stretch reads IDRSETSTTDTSKDDL. 2 disordered regions span residues 101–130 and 180–207; these read IDRS…VNGQ and DELE…SLLT. Low complexity predominate over residues 193–207; the sequence is NSLSRGSNSSSSLLT. Positions 266-405 constitute a DAGKc domain; sequence RRNKSIFVII…IDLMCCSQPS (140 aa). ATP is bound by residues 276 to 278 and T308; that span reads NPF. Substrate is bound at residue 333–336; it reads SGDG. Catalysis depends on D335, which acts as the Proton donor/acceptor. ATP is bound by residues E340, 366-368, R434, and R440; that span reads GSG. The segment covering 506–524 has biased composition (acidic residues); that stretch reads EYETENEDEDEDADADDED. Positions 506-525 are disordered; the sequence is EYETENEDEDEDADADDEDS. ATP is bound at residue 652–654; sequence DGE.

It localises to the golgi apparatus membrane. The enzyme catalyses (4R)-hydroxysphinganine + ATP = (4R)-hydroxysphinganine 1-phosphate + ADP + H(+). The catalysed reaction is a sphingoid base + ATP = a sphingoid 1-phosphate + ADP + H(+). It catalyses the reaction sphinganine + ATP = sphinganine 1-phosphate + ADP + H(+). Catalyzes the phosphorylation of the sphingoid long chain bases dihydrosphingosine (DHS or sphinganine) and phytosphingosine (PHS) to form dihydrosphingosine 1-phosphate (DHS-1P) and phytosphingosine 1-phosphate (PHS-1P) respectively. Redundant to LCB4, is only responsible for few percent of the total activity. Involved in the biosynthesis of sphingolipids and ceramides. Involved in heat-induced transient cell cycle arrest. Accumulation of phosphorylated sphingoid long chain bases (LCBPs) stimulates calcium influx and activates calcineurin signaling. Involved in heat-stress resistance. The sequence is that of Sphingoid long chain base kinase 5 (LCB5) from Saccharomyces cerevisiae (strain ATCC 204508 / S288c) (Baker's yeast).